The chain runs to 434 residues: Histidinol dehydrogenase (434 aa).

Tyr130, Gln188, and Asn211 together coordinate NAD(+). Substrate contacts are provided by Ser237, Gln259, and His262. The Zn(2+) site is built by Gln259 and His262. Catalysis depends on proton acceptor residues Glu326 and His327. Residues His327, Asp360, Glu414, and His419 each contribute to the substrate site. Asp360 contacts Zn(2+). His419 lines the Zn(2+) pocket.

This sequence belongs to the histidinol dehydrogenase family. As to quaternary structure, homodimer. Zn(2+) serves as cofactor.

The enzyme catalyses L-histidinol + 2 NAD(+) + H2O = L-histidine + 2 NADH + 3 H(+). It functions in the pathway amino-acid biosynthesis; L-histidine biosynthesis; L-histidine from 5-phospho-alpha-D-ribose 1-diphosphate: step 9/9. In terms of biological role, catalyzes the sequential NAD-dependent oxidations of L-histidinol to L-histidinaldehyde and then to L-histidine. This Salmonella typhi protein is Histidinol dehydrogenase.